Reading from the N-terminus, the 201-residue chain is Large ribosomal subunit protein uL4 (201 aa).

The segment at 39 to 70 (GRQGTKAQKTRSEVSGGGKKPWRQKGTGRARA) is disordered.

The protein belongs to the universal ribosomal protein uL4 family. Part of the 50S ribosomal subunit.

In terms of biological role, one of the primary rRNA binding proteins, this protein initially binds near the 5'-end of the 23S rRNA. It is important during the early stages of 50S assembly. It makes multiple contacts with different domains of the 23S rRNA in the assembled 50S subunit and ribosome. Functionally, forms part of the polypeptide exit tunnel. The polypeptide is Large ribosomal subunit protein uL4 (Marinobacter nauticus (strain ATCC 700491 / DSM 11845 / VT8) (Marinobacter aquaeolei)).